We begin with the raw amino-acid sequence, 118 residues long: Ribosome-binding factor A (118 aa).

It belongs to the RbfA family. As to quaternary structure, monomer. Binds 30S ribosomal subunits, but not 50S ribosomal subunits or 70S ribosomes.

Its subcellular location is the cytoplasm. Its function is as follows. One of several proteins that assist in the late maturation steps of the functional core of the 30S ribosomal subunit. Associates with free 30S ribosomal subunits (but not with 30S subunits that are part of 70S ribosomes or polysomes). Required for efficient processing of 16S rRNA. May interact with the 5'-terminal helix region of 16S rRNA. The polypeptide is Ribosome-binding factor A (Geobacter metallireducens (strain ATCC 53774 / DSM 7210 / GS-15)).